The chain runs to 279 residues: Urease accessory protein UreD (279 aa).

It belongs to the UreD family. UreD, UreF and UreG form a complex that acts as a GTP-hydrolysis-dependent molecular chaperone, activating the urease apoprotein by helping to assemble the nickel containing metallocenter of UreC. The UreE protein probably delivers the nickel.

The protein resides in the cytoplasm. Functionally, required for maturation of urease via the functional incorporation of the urease nickel metallocenter. This chain is Urease accessory protein UreD, found in Rhodopseudomonas palustris (strain ATCC BAA-98 / CGA009).